Reading from the N-terminus, the 1309-residue chain is Clustered mitochondria protein homolog (1309 aa).

The tract at residues 1-34 is disordered; sequence MLLNGDCPESLKKEAAAAEPPRENGLDEAGPGDE. Residues 9–25 show a composition bias toward basic and acidic residues; the sequence is ESLKKEAAAAEPPRENG. A phosphoserine mark is found at Ser-279 and Ser-281. One can recognise a Clu domain in the interval 335 to 577; it reads RAEDAYTSRL…RTFPPDLNFL (243 aa). The segment covering 636–651 has biased composition (polar residues); that stretch reads LETPSSLENGGPSSLE. The tract at residues 636-674 is disordered; the sequence is LETPSSLENGGPSSLESKSEDPPGQEAGSEEEGSSASGL. Ser-654, Ser-664, and Ser-723 each carry phosphoserine. TPR repeat units lie at residues 978–1011, 1020–1053, 1104–1137, and 1146–1179; these read AFHF…FNNV, CACL…SERV, ALLD…STKY, and ALSH…YKTQ. Positions 1264-1278 are enriched in basic and acidic residues; that stretch reads HQLQEASRNRDRAEE. The interval 1264–1309 is disordered; that stretch reads HQLQEASRNRDRAEEPMATEPAPAGAPGDLGSQPPAAKDPSPSVQG. A compositionally biased stretch (low complexity) spans 1279–1290; the sequence is PMATEPAPAGAP.

It belongs to the CLU family.

It localises to the cytoplasm. Its subcellular location is the cytoplasmic granule. Its function is as follows. mRNA-binding protein involved in proper cytoplasmic distribution of mitochondria. Specifically binds mRNAs of nuclear-encoded mitochondrial proteins in the cytoplasm and regulates transport or translation of these transcripts close to mitochondria, playing a role in mitochondrial biogenesis. The protein is Clustered mitochondria protein homolog (CLUH) of Homo sapiens (Human).